The following is a 396-amino-acid chain: Pre-mRNA-splicing regulator WTAP (396 aa).

Residue methionine 1 is modified to N-acetylmethionine. Serine 14 is modified (phosphoserine). Low complexity-rich tracts occupy residues 240-257 (QQQQ…TTSS) and 278-291 (SNGS…SGSG). Residues 240–396 (QQQQSQASAP…SSVNVQGAVL (157 aa)) form a disordered region. Residues serine 297, serine 305, serine 306, and serine 341 each carry the phosphoserine modification. Positions 305-316 (SSSGNGNKASNS) are enriched in low complexity. Polar residues predominate over residues 340-351 (DSPTGSENSLTH). The residue at position 350 (threonine 350) is a Phosphothreonine. Residues 352-368 (HSNDTDSSHDPQEEKAV) show a composition bias toward basic and acidic residues. The segment covering 380–396 (HVQNGLDSSVNVQGAVL) has biased composition (polar residues). The residue at position 388 (serine 388) is a Phosphoserine.

It belongs to the fl(2)d family. In terms of assembly, component of the WMM complex, a N6-methyltransferase complex composed of a catalytic subcomplex, named MAC, and of an associated subcomplex, named MACOM. The MAC subcomplex is composed of METTL3 and METTL14. The MACOM subcomplex is composed of WTAP, ZC3H13, CBLL1/HAKAI, VIRMA, and, in some cases of RBM15 (RBM15 or RBM15B). Interacts with WT1. Also a component of a MACOM-like complex, named WTAP complex, composed of WTAP, ZC3H13, CBLL1, VIRMA, RBM15, BCLAF1 and THRAP3. Interacts with CPNE4 (via VWFA domain).

Its subcellular location is the nucleus speckle. The protein resides in the nucleus. The protein localises to the nucleoplasm. It is found in the cytoplasm. Associated component of the WMM complex, a complex that mediates N6-methyladenosine (m6A) methylation of RNAs, a modification that plays a role in the efficiency of mRNA splicing and RNA processing. Acts as a key regulator of m6A methylation by promoting m6A methylation of mRNAs at the 3'-UTR. Required for accumulation of METTL3 and METTL14 to nuclear speckle. Acts as a mRNA splicing regulator. Regulates G2/M cell-cycle transition by binding to the 3' UTR of CCNA2, which enhances its stability. Impairs WT1 DNA-binding ability and inhibits expression of WT1 target genes. This chain is Pre-mRNA-splicing regulator WTAP, found in Mus musculus (Mouse).